Reading from the N-terminus, the 321-residue chain is Tetraacyldisaccharide 4'-kinase (321 aa).

54 to 61 (SVGGTGKT) provides a ligand contact to ATP.

This sequence belongs to the LpxK family.

It catalyses the reaction a lipid A disaccharide + ATP = a lipid IVA + ADP + H(+). The protein operates within glycolipid biosynthesis; lipid IV(A) biosynthesis; lipid IV(A) from (3R)-3-hydroxytetradecanoyl-[acyl-carrier-protein] and UDP-N-acetyl-alpha-D-glucosamine: step 6/6. Its function is as follows. Transfers the gamma-phosphate of ATP to the 4'-position of a tetraacyldisaccharide 1-phosphate intermediate (termed DS-1-P) to form tetraacyldisaccharide 1,4'-bis-phosphate (lipid IVA). The chain is Tetraacyldisaccharide 4'-kinase from Rickettsia typhi (strain ATCC VR-144 / Wilmington).